Reading from the N-terminus, the 539-residue chain is Putative serine/threonine-protein kinase L670 (539 aa).

Positions 1–115 constitute a Cyclin N-terminal domain; that stretch reads MSLFNNHPEL…ILKVFKFGLH (115 aa). The 262-residue stretch at 258–519 folds into the Protein kinase domain; that stretch reads MNVIEKLGIG…VLKIFSECFV (262 aa). ATP is bound by residues 264–272 and K285; that span reads LGIGSFGLV. D375 serves as the catalytic Proton acceptor.

This sequence belongs to the protein kinase superfamily. Ser/Thr protein kinase family.

The catalysed reaction is L-seryl-[protein] + ATP = O-phospho-L-seryl-[protein] + ADP + H(+). It catalyses the reaction L-threonyl-[protein] + ATP = O-phospho-L-threonyl-[protein] + ADP + H(+). The polypeptide is Putative serine/threonine-protein kinase L670 (Acanthamoeba polyphaga mimivirus (APMV)).